Reading from the N-terminus, the 362-residue chain is Endopolygalacturonase II (362 aa).

An N-terminal signal peptide occupies residues 1–21 (MHSFASLLAYGLAASATLASA). Positions 22–27 (SPIEAR) are excised as a propeptide. Cys-30 and Cys-45 are disulfide-bonded. Residues 156–186 (ADDITLTDITINNADGDTLGGHNTDAFDVGN) form a PbH1 1 repeat. Asp-201 serves as the catalytic Proton donor. Cys-203 and Cys-219 form a disulfide bridge. His-223 is a catalytic residue. PbH1 repeat units lie at residues 238–259 (VKNV…RIKT), 267–289 (VSEI…VIQQ), and 301–322 (TNGV…DSKA). Asn-240 carries an N-linked (GlcNAc...) (high mannose) asparagine glycan. Disulfide bonds link Cys-329-Cys-334 and Cys-353-Cys-362.

It belongs to the glycosyl hydrolase 28 family.

It is found in the secreted. It carries out the reaction (1,4-alpha-D-galacturonosyl)n+m + H2O = (1,4-alpha-D-galacturonosyl)n + (1,4-alpha-D-galacturonosyl)m.. In terms of biological role, involved in maceration and soft-rotting of plant tissue. Hydrolyzes the 1,4-alpha glycosidic bonds of de-esterified pectate in the smooth region of the plant cell wall. The sequence is that of Endopolygalacturonase II from Aspergillus niger.